Reading from the N-terminus, the 98-residue chain is Integration host factor subunit alpha (98 aa).

The disordered stretch occupies residues 51–71 (NFDLRDKNERPGRNPKTGEDI). Residues 53 to 69 (DLRDKNERPGRNPKTGE) are compositionally biased toward basic and acidic residues.

This sequence belongs to the bacterial histone-like protein family. In terms of assembly, heterodimer of an alpha and a beta chain.

Functionally, this protein is one of the two subunits of integration host factor, a specific DNA-binding protein that functions in genetic recombination as well as in transcriptional and translational control. This is Integration host factor subunit alpha from Vibrio parahaemolyticus serotype O3:K6 (strain RIMD 2210633).